Reading from the N-terminus, the 727-residue chain is Calpain-like protease 1 (727 aa).

The region spanning 70–317 (SRFYPPIPIS…FKQLYLNWNQ (248 aa)) is the Calpain catalytic domain. Residues cysteine 128, histidine 271, and asparagine 296 contribute to the active site.

It belongs to the peptidase C2 family. PalB/RIM13 subfamily. In terms of assembly, interacts with SNF7, which may act together with RIM20 as a scaffold to recruit RIM13 to its substrate RIM101.

In terms of biological role, required for the proteolytic cleavage of the transcriptional repressor RIM101 in response to alkaline ambient pH, which is necessary for sporulation and invasive growth. Probably the protease that cleaves RIM101. This Saccharomyces cerevisiae (strain ATCC 204508 / S288c) (Baker's yeast) protein is Calpain-like protease 1 (RIM13).